A 319-amino-acid chain; its full sequence is Insulin gene enhancer protein ISL-2 (319 aa).

LIM zinc-binding domains lie at 1 to 43 (FLLR…CKRD) and 52 to 106 (CAQC…RADH). Disordered regions lie at residues 106-151 (HGPP…EKTT), 218-237 (QQHSDKTSLQGLTGTPLVAG), and 286-319 (ESGSLGTSSGSDVTSLSSQLPDTPNSMVPSPAET). The homeobox DNA-binding region spans 150–209 (TTRVRTVLNEKQLHTLRTCYAANPRPDALMKEQLVEMTGLSPRVIRVWFQNKRCKDKKKS). Over residues 218-230 (QQHSDKTSLQGLT) the composition is skewed to polar residues. A compositionally biased stretch (low complexity) spans 286–303 (ESGSLGTSSGSDVTSLSS). Residues 304-319 (QLPDTPNSMVPSPAET) show a composition bias toward polar residues.

It localises to the nucleus. Functionally, transcriptional factor that defines subclasses of motoneurons that segregate into columns in the spinal cord and select distinct axon pathways. Acts in conjunction with LIM-1, LIM-3 and ISL-1. In Gallus gallus (Chicken), this protein is Insulin gene enhancer protein ISL-2 (ISL2).